We begin with the raw amino-acid sequence, 349 residues long: Protein RecA (349 aa).

64 to 71 (GPESSGKT) serves as a coordination point for ATP.

It belongs to the RecA family.

Its subcellular location is the cytoplasm. Its function is as follows. Can catalyze the hydrolysis of ATP in the presence of single-stranded DNA, the ATP-dependent uptake of single-stranded DNA by duplex DNA, and the ATP-dependent hybridization of homologous single-stranded DNAs. It interacts with LexA causing its activation and leading to its autocatalytic cleavage. This is Protein RecA from Rhodopseudomonas palustris (strain ATCC BAA-98 / CGA009).